A 37-amino-acid chain; its full sequence is Large ribosomal subunit protein bL36c (37 aa).

It belongs to the bacterial ribosomal protein bL36 family.

It is found in the plastid. The protein resides in the chloroplast. This Lotus japonicus (Lotus corniculatus var. japonicus) protein is Large ribosomal subunit protein bL36c.